The primary structure comprises 311 residues: Nuclear hormone receptor family member nhr-111 (311 aa).

Residues 39 to 115 (ITLCAVCGDT…KGMNKNAVQP (77 aa)) constitute a DNA-binding region (nuclear receptor). NR C4-type zinc fingers lie at residues 42–62 (CAVC…CFGC) and 78–98 (CWNG…CKSC). In terms of domain architecture, NR LBD spans 116-311 (ERTSHSYTVE…KACEIVISFL (196 aa)).

Belongs to the nuclear hormone receptor family.

The protein localises to the nucleus. In terms of biological role, orphan nuclear receptor. The sequence is that of Nuclear hormone receptor family member nhr-111 (nhr-111) from Caenorhabditis elegans.